Consider the following 220-residue polypeptide: GTP cyclohydrolase 1 (220 aa).

Residues Cys113, His116, and Cys184 each contribute to the Zn(2+) site.

The protein belongs to the GTP cyclohydrolase I family. In terms of assembly, homomer.

It carries out the reaction GTP + H2O = 7,8-dihydroneopterin 3'-triphosphate + formate + H(+). It participates in cofactor biosynthesis; 7,8-dihydroneopterin triphosphate biosynthesis; 7,8-dihydroneopterin triphosphate from GTP: step 1/1. This Hamiltonella defensa subsp. Acyrthosiphon pisum (strain 5AT) protein is GTP cyclohydrolase 1.